We begin with the raw amino-acid sequence, 511 residues long: Maturase K (511 aa).

It belongs to the intron maturase 2 family. MatK subfamily.

It is found in the plastid. Its subcellular location is the chloroplast. Its function is as follows. Usually encoded in the trnK tRNA gene intron. Probably assists in splicing its own and other chloroplast group II introns. The sequence is that of Maturase K from Psathyrostachys juncea (Russian wildrye).